The sequence spans 64 residues: Disintegrin schistatin (64 aa).

Residues 1 to 64 form the Disintegrin domain; that stretch reads NSVHPCCDPV…PDCPRNRYNV (64 aa). 4 disulfides stabilise this stretch: C6/C29, C20/C26, C25/C50, and C38/C57. The short motif at 42 to 44 is the Cell attachment site element; it reads RGD.

It belongs to the disintegrin family. Dimeric disintegrin subfamily. In terms of assembly, homodimer; disulfide-linked. As to expression, expressed by the venom gland.

Its subcellular location is the secreted. May bind to both alpha-IIb/beta-3 (ITGA2B/ITGB3) and alpha-V/beta-3 (ITGAV/ITGB3) integrins, and may inhibit platelet aggregation. The chain is Disintegrin schistatin from Echis carinatus (Saw-scaled viper).